The chain runs to 428 residues: Histidine--tRNA ligase (428 aa).

This sequence belongs to the class-II aminoacyl-tRNA synthetase family. In terms of assembly, homodimer.

Its subcellular location is the cytoplasm. The enzyme catalyses tRNA(His) + L-histidine + ATP = L-histidyl-tRNA(His) + AMP + diphosphate + H(+). This Chlamydia trachomatis serovar A (strain ATCC VR-571B / DSM 19440 / HAR-13) protein is Histidine--tRNA ligase.